A 172-amino-acid chain; its full sequence is Small ribosomal subunit protein uS5 (172 aa).

The region spanning 7-70 is the S5 DRBM domain; it reads VVEHLVNVNR…QNAKKYMIEV (64 aa).

The protein belongs to the universal ribosomal protein uS5 family. In terms of assembly, part of the 30S ribosomal subunit. Contacts proteins S4 and S8.

With S4 and S12 plays an important role in translational accuracy. In terms of biological role, located at the back of the 30S subunit body where it stabilizes the conformation of the head with respect to the body. This Orientia tsutsugamushi (strain Boryong) (Rickettsia tsutsugamushi) protein is Small ribosomal subunit protein uS5.